The following is a 331-amino-acid chain: Ketol-acid reductoisomerase (NADP(+)) (331 aa).

The region spanning 2 to 182 (AQLFYDSDAD…GGTRAGILET (181 aa)) is the KARI N-terminal Rossmann domain. Residues 25–28 (YGSQ), S51, S53, and 83–86 (DEFQ) contribute to the NADP(+) site. H108 is a catalytic residue. NADP(+) is bound at residue G134. The KARI C-terminal knotted domain maps to 183–328 (NFKEETETDL…KGLRSMFSWL (146 aa)). Mg(2+) contacts are provided by D191, E195, E227, and E231. S252 is a substrate binding site.

Belongs to the ketol-acid reductoisomerase family. Mg(2+) is required as a cofactor.

It carries out the reaction (2R)-2,3-dihydroxy-3-methylbutanoate + NADP(+) = (2S)-2-acetolactate + NADPH + H(+). The catalysed reaction is (2R,3R)-2,3-dihydroxy-3-methylpentanoate + NADP(+) = (S)-2-ethyl-2-hydroxy-3-oxobutanoate + NADPH + H(+). Its pathway is amino-acid biosynthesis; L-isoleucine biosynthesis; L-isoleucine from 2-oxobutanoate: step 2/4. It functions in the pathway amino-acid biosynthesis; L-valine biosynthesis; L-valine from pyruvate: step 2/4. Involved in the biosynthesis of branched-chain amino acids (BCAA). Catalyzes an alkyl-migration followed by a ketol-acid reduction of (S)-2-acetolactate (S2AL) to yield (R)-2,3-dihydroxy-isovalerate. In the isomerase reaction, S2AL is rearranged via a Mg-dependent methyl migration to produce 3-hydroxy-3-methyl-2-ketobutyrate (HMKB). In the reductase reaction, this 2-ketoacid undergoes a metal-dependent reduction by NADPH to yield (R)-2,3-dihydroxy-isovalerate. This is Ketol-acid reductoisomerase (NADP(+)) from Synechococcus sp. (strain CC9311).